Consider the following 307-residue polypeptide: MRDALGREVRSVRISVTMRCNMACVYCHREGERPGRSELSAAEWGRLLRACAEIGVRKVKITGGEPLLRRDLIEIIENAEGFEEVSLVTNGVLLADYAGDLAEAGLDRVNVSLDTVDRKLYRKLTRSRFSPDDVIRGIEAAVSEGLTPVKVNVVLTSETVKTLPTLVEELADLEGLKLQLIEPMGSIPGFRPAHAEDGLRALGEYEPELERVRTFHSREVYRLNNGMAVEVVKPMDGVMCEACTRIRLTHDGKYKGCLMAPPKPLPRDDFGELVRTLKEYVRTRDDTFEVHQGTSVMGRMRGDVSGR.

Positions 4–222 constitute a Radical SAM core domain; sequence ALGREVRSVR…RTFHSREVYR (219 aa). Arg13 serves as a coordination point for GTP. Positions 20 and 24 each coordinate [4Fe-4S] cluster. Tyr26 is a binding site for S-adenosyl-L-methionine. Cys27 provides a ligand contact to [4Fe-4S] cluster. Lys60 contributes to the GTP binding site. Gly64 and Ser112 together coordinate S-adenosyl-L-methionine. GTP is bound at residue Lys150. 2 residues coordinate [4Fe-4S] cluster: Cys240 and Cys243. Residue 245 to 247 participates in GTP binding; sequence RIR. Cys257 contacts [4Fe-4S] cluster.

It belongs to the radical SAM superfamily. MoaA family. [4Fe-4S] cluster is required as a cofactor.

It carries out the reaction GTP + AH2 + S-adenosyl-L-methionine = (8S)-3',8-cyclo-7,8-dihydroguanosine 5'-triphosphate + 5'-deoxyadenosine + L-methionine + A + H(+). Its pathway is cofactor biosynthesis; molybdopterin biosynthesis. Catalyzes the cyclization of GTP to (8S)-3',8-cyclo-7,8-dihydroguanosine 5'-triphosphate. The chain is Probable GTP 3',8-cyclase from Methanopyrus kandleri (strain AV19 / DSM 6324 / JCM 9639 / NBRC 100938).